The sequence spans 432 residues: Glutamate-1-semialdehyde 2,1-aminomutase 2 (432 aa).

At lysine 268 the chain carries N6-(pyridoxal phosphate)lysine.

Belongs to the class-III pyridoxal-phosphate-dependent aminotransferase family. HemL subfamily. In terms of assembly, homodimer. It depends on pyridoxal 5'-phosphate as a cofactor.

It is found in the cytoplasm. It catalyses the reaction (S)-4-amino-5-oxopentanoate = 5-aminolevulinate. It functions in the pathway porphyrin-containing compound metabolism; protoporphyrin-IX biosynthesis; 5-aminolevulinate from L-glutamyl-tRNA(Glu): step 2/2. The polypeptide is Glutamate-1-semialdehyde 2,1-aminomutase 2 (Listeria monocytogenes serotype 4b (strain F2365)).